We begin with the raw amino-acid sequence, 411 residues long: LL-diaminopimelate aminotransferase (411 aa).

The substrate site is built by Tyr16 and Gly43. Pyridoxal 5'-phosphate contacts are provided by residues Tyr73, 109–110, Tyr133, Asn188, Tyr219, and 247–249; these read AK and SYS. Substrate contacts are provided by Lys110, Tyr133, and Asn188. Lys250 carries the post-translational modification N6-(pyridoxal phosphate)lysine. Pyridoxal 5'-phosphate-binding residues include Arg258 and Asn293. Positions 293 and 389 each coordinate substrate.

Belongs to the class-I pyridoxal-phosphate-dependent aminotransferase family. LL-diaminopimelate aminotransferase subfamily. In terms of assembly, homodimer. The cofactor is pyridoxal 5'-phosphate.

The catalysed reaction is (2S,6S)-2,6-diaminopimelate + 2-oxoglutarate = (S)-2,3,4,5-tetrahydrodipicolinate + L-glutamate + H2O + H(+). Its pathway is amino-acid biosynthesis; L-lysine biosynthesis via DAP pathway; LL-2,6-diaminopimelate from (S)-tetrahydrodipicolinate (aminotransferase route): step 1/1. Its function is as follows. Involved in the synthesis of meso-diaminopimelate (m-DAP or DL-DAP), required for both lysine and peptidoglycan biosynthesis. Catalyzes the direct conversion of tetrahydrodipicolinate to LL-diaminopimelate. This is LL-diaminopimelate aminotransferase from Methanosphaera stadtmanae (strain ATCC 43021 / DSM 3091 / JCM 11832 / MCB-3).